The chain runs to 511 residues: 2'-acyl-2-O-sulfo-trehalose (hydroxy)phthioceranyltransferase PapA1 (511 aa).

It belongs to the PapA acyltransferase family.

It catalyses the reaction a (hydroxy)phthioceranyl-[(hydroxy)phthioceranic acid synthase] + 2'-palmitoyl/stearoyl-2-O-sulfo-alpha,alpha-trehalose = a 3'-(hydroxy)phthioceranyl-2'-palmitoyl/stearoyl-2-O-sulfo-alpha,alpha-trehalose + holo-[(hydroxy)phthioceranic acid synthase].. In terms of biological role, catalyzes the acylation of trehalose-2-sulfate-2'-palmitate (SL659) by adding the (hydroxy)phthioceranoyl group at the 3'-position to yield the diacylated intermediate 2-palmitoyl-3-(C43)-phthioceranyl-alpha, alpha'-D-trehalose-2'-sulfate (SL1278). The chain is 2'-acyl-2-O-sulfo-trehalose (hydroxy)phthioceranyltransferase PapA1 (papA1) from Mycobacterium bovis (strain BCG / Pasteur 1173P2).